Reading from the N-terminus, the 69-residue chain is MAKQCEICGKKPLVGNYVSHSNIKTKRVFNPNLQHMRNQFPDGRIKTITICTRCIRSGHVTKPSIHKGS.

Belongs to the bacterial ribosomal protein bL28 family.

The polypeptide is Large ribosomal subunit protein bL28 (Lawsonia intracellularis (strain PHE/MN1-00)).